A 566-amino-acid polypeptide reads, in one-letter code: Autophagy-related protein 22-1 (566 aa).

Residues Tyr-38 to Leu-58 traverse the membrane as a helical segment. Residue Asn-103 is glycosylated (N-linked (GlcNAc...) asparagine). The next 3 membrane-spanning stretches (helical) occupy residues Ser-110–Phe-130, Ala-146–Leu-168, and Ser-179–Ala-199. The N-linked (GlcNAc...) asparagine glycan is linked to Asn-200. 8 consecutive transmembrane segments (helical) span residues Gly-242–Phe-262, Val-278–Leu-298, Phe-351–Leu-371, Ile-382–Trp-402, Ile-416–Ile-436, Trp-451–Ala-471, Phe-488–Val-510, and Ala-519–Val-539. A disordered region spans residues Lys-547–Glu-566.

This sequence belongs to the ATG22 family.

It localises to the vacuole membrane. Vacuolar effluxer which mediate the efflux of amino acids resulting from autophagic degradation. The release of autophagic amino acids allows the maintenance of protein synthesis and viability during nitrogen starvation. The chain is Autophagy-related protein 22-1 (ATG22-1) from Phaeosphaeria nodorum (strain SN15 / ATCC MYA-4574 / FGSC 10173) (Glume blotch fungus).